The sequence spans 248 residues: Glutaredoxin domain-containing cysteine-rich protein 2 (248 aa).

Composition is skewed to basic and acidic residues over residues 1–16 (MEDP…DGKP) and 157–172 (LMNK…QHDR). Disordered stretches follow at residues 1–20 (MEDP…RKVR) and 150–172 (EEAE…QHDR).

This sequence belongs to the GRXCR2 family. As to quaternary structure, interacts with TPRN; the interaction restricts TPRN to the stereocilum basal region.

The protein localises to the cell projection. Its subcellular location is the stereocilium. Functionally, required for hearing. Plays a role in maintaining cochlear stereocilia bundles that are involved in sound detection. Ensures the restriction of TPRN to the basal region of stereocilia in hair cells. The protein is Glutaredoxin domain-containing cysteine-rich protein 2 (GRXCR2) of Homo sapiens (Human).